Reading from the N-terminus, the 163-residue chain is Jun dimerization protein 2 (163 aa).

2 disordered regions span residues 1 to 20 (MMPGQIPDPSVTAGSLPGLG) and 59 to 89 (KRPQPVKSELDEEEERRKRRREKNKVAAARC). Residue Lys-65 forms a Glycyl lysine isopeptide (Lys-Gly) (interchain with G-Cter in SUMO2) linkage. The bZIP domain occupies 72–135 (EERRKRRREK…QQLILMLNRH (64 aa)). The basic motif stretch occupies residues 74 to 96 (RRKRRREKNKVAAARCRNKKKER). The segment at 100–128 (LQRESERLELMNAELKTQIEELKLERQQL) is leucine-zipper. Residue Thr-148 is modified to Phosphothreonine; by MAPK8.

This sequence belongs to the bZIP family. ATF subfamily. As to quaternary structure, forms a homodimer or heterodimer with JUN, JUNB, JUND, CEBPG and ATF2 thereby inhibiting transactivation by JUN, ATF2 and CEBPG. Binds multiple DNA elements such as cAMP-response element (CRE) and TPA response element (TRE) either as homodimer or heterodimer. Interacts with IRF2BP1. In terms of processing, phosphorylation of Thr-148 by MAPK8 in response to different stress conditions such as, UV irradiation, oxidatives stress and anisomycin treatments. Polyubiquitinated; probably by IRF2BP1. As to expression, ubiquitously expressed in all adult tissues tested as well in embryos.

It localises to the nucleus. Functionally, component of the AP-1 transcription factor that represses transactivation mediated by the Jun family of proteins. Involved in a variety of transcriptional responses associated with AP-1, such as UV-induced apoptosis, cell differentiation, tumorigenesis and antitumogeneris. Can also function as a repressor by recruiting histone deacetylase 3/HDAC3 to the promoter region of JUN. May control transcription via direct regulation of the modification of histones and the assembly of chromatin. This is Jun dimerization protein 2 (Jdp2) from Mus musculus (Mouse).